Reading from the N-terminus, the 514-residue chain is Antiseptic resistance protein (514 aa).

Over 1-23 the chain is Cytoplasmic; that stretch reads MISFFTKTTDMMTSKKRWTALVV. A helical membrane pass occupies residues 24-41; the sequence is LAVSLFVVTMDMTILIMA. The Extracellular portion of the chain corresponds to 42 to 57; it reads LPELVRELEPSGTQQL. The helical transmembrane segment at 58–75 threads the bilayer; the sequence is WIVDIYSLVLAGFIIPLS. Residues 76–86 lie on the Cytoplasmic side of the membrane; the sequence is AFADKWGRKKA. The chain crosses the membrane as a helical span at residues 87 to 104; sequence LLTGFALFGLVSLAIFFA. Topologically, residues 105-112 are extracellular; the sequence is ESAEFVIA. A helical transmembrane segment spans residues 113–130; sequence IRFLLGIAGALIMPTTLS. Over 131-146 the chain is Cytoplasmic; that stretch reads MIRVIFENPKERATAL. A helical membrane pass occupies residues 147–164; the sequence is AVWSIASSIGAVFGPIIG. Residues 165 to 172 are Extracellular-facing; it reads GALLEQFS. A helical membrane pass occupies residues 173–190; the sequence is WHSAFLINVPFAIIAVVA. Residues 191–207 lie on the Cytoplasmic side of the membrane; it reads GLFLLPESKLSKEKSHS. Residues 208-225 traverse the membrane as a helical segment; that stretch reads WDIPSTILSIAGMIGLVW. The Extracellular portion of the chain corresponds to 226 to 237; sequence SIKEFSKEGLAD. Residues 238-255 traverse the membrane as a helical segment; sequence IIPWVVIVLAITMIVIFV. The Cytoplasmic segment spans residues 256–278; that stretch reads KRNLSSSDPMLDVRLFKKRSFSA. A helical membrane pass occupies residues 279–295; sequence GTIAAFMTMFAMASVLL. Residues 296 to 315 are Extracellular-facing; the sequence is LASQWLQVVEELSPFKAGLY. The chain crosses the membrane as a helical span at residues 316-333; that stretch reads LLPMAIGDMVFAPIAPGL. The Cytoplasmic portion of the chain corresponds to 334-341; sequence AARFGPKI. A helical transmembrane segment spans residues 342–360; the sequence is VLPSGIGIAAIGMFIMYFF. The Extracellular portion of the chain corresponds to 361–369; sequence GHPLSYSTM. Residues 370-387 traverse the membrane as a helical segment; it reads ALALILVGAGMASLAVAS. The Cytoplasmic segment spans residues 388-408; sequence ALIMLETPTSKAGNAAAVEES. A helical transmembrane segment spans residues 409–426; the sequence is MYDLGNVFGVAVLGSLSS. Over 427 to 481 the chain is Extracellular; that stretch reads MLYRVFLDISSFSSKGIVGDLAHVAEESVVGAVEVAKATGIKQLANEAVTSFNDA. The helical transmembrane segment at 482-499 threads the bilayer; sequence FVATALVGGIIMIIISIV. Topologically, residues 500–514 are cytoplasmic; that stretch reads VYLLIPKSLDITKQK.

It belongs to the major facilitator superfamily.

It is found in the cell membrane. Functionally, confers export-mediated resistance against antiseptic and disinfectant compounds such as intercalating dyes, quaternary ammonium salts and diamidines. This Staphylococcus aureus (strain Mu50 / ATCC 700699) protein is Antiseptic resistance protein (qacA).